Consider the following 408-residue polypeptide: Broad specificity amino-acid racemase (408 aa).

The first 24 residues, 1–24 (MNFKKTLLSIAIASASLTPAFSYS), serve as a signal peptide directing secretion. The cysteines at positions 71 and 97 are disulfide-linked. Catalysis depends on Lys-75, which acts as the Proton acceptor. Lys-75 is subject to N6-(pyridoxal phosphate)lysine. Arg-174 is a substrate binding site. Catalysis depends on Tyr-300, which acts as the Proton acceptor. A substrate-binding site is contributed by Met-348.

It belongs to the alanine racemase family. Bsr subfamily. Pyridoxal 5'-phosphate serves as cofactor.

The protein resides in the periplasm. The catalysed reaction is an L-alpha-amino acid = a D-alpha-amino acid. It catalyses the reaction L-lysine = D-lysine. The enzyme catalyses L-arginine = D-arginine. Its function is as follows. Amino-acid racemase able to utilize a broad range of substrates. The protein is Broad specificity amino-acid racemase (alr) of Vibrio vulnificus (strain CMCP6).